The primary structure comprises 264 residues: Phosphate import ATP-binding protein PstB (264 aa).

In terms of domain architecture, ABC transporter spans 11–250 (LKAEALSVYY…DTTEKIFDSP (240 aa)). 43–50 (GPSGCGKS) contributes to the ATP binding site.

Belongs to the ABC transporter superfamily. Phosphate importer (TC 3.A.1.7) family. As to quaternary structure, the complex is composed of two ATP-binding proteins (PstB), two transmembrane proteins (PstC and PstA) and a solute-binding protein (PstS).

It localises to the cell inner membrane. It carries out the reaction phosphate(out) + ATP + H2O = ADP + 2 phosphate(in) + H(+). In terms of biological role, part of the ABC transporter complex PstSACB involved in phosphate import. Responsible for energy coupling to the transport system. The polypeptide is Phosphate import ATP-binding protein PstB (Synechococcus sp. (strain ATCC 27144 / PCC 6301 / SAUG 1402/1) (Anacystis nidulans)).